Consider the following 385-residue polypeptide: AA13 family lytic polysaccharide monooxygenase NCU08746 (385 aa).

An N-terminal signal peptide occupies residues 1-18; sequence MKFSIISVALASAITVDA. Histidine 19 contacts Cu(2+). Histidine 19 is subject to Methylhistidine. A Chitin-binding type-4 domain is found at 19 to 248; sequence HGYLTIPFSR…AQVYLSCADI (230 aa). Cysteine 40 and cysteine 43 are joined by a disulfide. Asparagine 54 carries an N-linked (GlcNAc...) asparagine glycan. 6 cysteine pairs are disulfide-bonded: cysteine 66-cysteine 245, cysteine 102-cysteine 203, cysteine 118-cysteine 145, cysteine 153-cysteine 161, cysteine 167-cysteine 173, and cysteine 181-cysteine 192. Histidine 109 provides a ligand contact to Cu(2+). Residue tyrosine 242 coordinates Cu(2+). In terms of domain architecture, CBM20 spans 278-385; it reads CTPAATVAVT…ESVAVESSWK (108 aa). Asparagine 365 carries an N-linked (GlcNAc...) asparagine glycan.

The protein belongs to the polysaccharide monooxygenase AA13 family. Cu(2+) is required as a cofactor.

It is found in the secreted. The enzyme catalyses starch + reduced acceptor + O2 = D-glucono-1,5-lactone-terminated malto-oligosaccharides + short-chain malto-oligosaccharides + acceptor + H2O.. In terms of biological role, starch-active lytic polysaccharide monooxygenase that oxidizes the C1 position of starch substrates, but not in cellulose or chitin. Catalysis by LPMOs requires the reduction of the active-site copper from Cu(II) to Cu(I) by a reducing agent and H(2)O(2) or O(2) as a cosubstrate. This chain is AA13 family lytic polysaccharide monooxygenase NCU08746, found in Neurospora crassa (strain ATCC 24698 / 74-OR23-1A / CBS 708.71 / DSM 1257 / FGSC 987).